A 153-amino-acid polypeptide reads, in one-letter code: Large ribosomal subunit protein uL30 (153 aa).

It belongs to the universal ribosomal protein uL30 family. As to quaternary structure, part of the 50S ribosomal subunit.

The sequence is that of Large ribosomal subunit protein uL30 from Methanospirillum hungatei JF-1 (strain ATCC 27890 / DSM 864 / NBRC 100397 / JF-1).